Reading from the N-terminus, the 152-residue chain is Transcriptional regulator MraZ (152 aa).

SpoVT-AbrB domains are found at residues 5–52 (ASAI…PLEA) and 81–124 (AHEC…DEAA).

It belongs to the MraZ family. Forms oligomers.

It localises to the cytoplasm. Its subcellular location is the nucleoid. The sequence is that of Transcriptional regulator MraZ from Shewanella loihica (strain ATCC BAA-1088 / PV-4).